The chain runs to 484 residues: Nuclear rim protein 1 (484 aa).

Residue Ser-3 is modified to Phosphoserine. 2 consecutive transmembrane segments (helical) span residues 145-165 and 237-257; these read FTIF…MFGY and IPTN…IVFL. A disordered region spans residues 416-457; the sequence is SSNENLEKGGAFLPNQDQNRPSKSLSPLRKTPLSARQKRFEG. Ser-417 carries the phosphoserine modification. The segment covering 430–440 has biased composition (polar residues); the sequence is NQDQNRPSKSL. Position 474 is a phosphoserine (Ser-474).

It belongs to the NUR1 family. As to quaternary structure, interacts with CSM1.

The protein localises to the nucleus membrane. In terms of biological role, member of a perinuclear network that controls recombination at multiple loci to maintain genome stability. Required for rDNA repeat stability. The protein is Nuclear rim protein 1 (NUR1) of Saccharomyces cerevisiae (strain JAY291) (Baker's yeast).